The following is a 247-amino-acid chain: Triosephosphate isomerase (247 aa).

2 residues coordinate substrate: asparagine 10 and lysine 12. Catalysis depends on histidine 94, which acts as the Electrophile. Glutamate 164 (proton acceptor) is an active-site residue.

This sequence belongs to the triosephosphate isomerase family. Homodimer.

It carries out the reaction D-glyceraldehyde 3-phosphate = dihydroxyacetone phosphate. The protein operates within carbohydrate biosynthesis; gluconeogenesis. Its pathway is carbohydrate degradation; glycolysis; D-glyceraldehyde 3-phosphate from glycerone phosphate: step 1/1. The protein is Triosephosphate isomerase (Tpi) of Drosophila melanogaster (Fruit fly).